We begin with the raw amino-acid sequence, 387 residues long: MDAEKKSAHFRQISSYKPQLLVLSSIQENPSSKISEKANIKADNDAEIGVFGAEKYFSMKLDHVDSTADITKQHEKENTHDHPNANPNPNPNPHPHPHPQLTKTTSSRSKTSRHGTPSVRSESSCNSQTFLMRINNHNENKQRKMNDTSISFGGFRCYGPCSGVKTVHTDPKNSCKSRNSDRDFVAYDARKHNDKPRLHFEAKKADFHAQEKISLPIQRSDIAMNLERKLSLLTWDAIPNQLSTKNNNHNNNGNNSSMSSNTQEEETASVASSDLFEIENITSSVYEPSEASIGWSVVTGSMADQSVISDFDMMKRVTRNGPVVKTKPVIGEKVRSAGFLSGCKSHKAVSVVDSSRKVKETAKVDHHEMSHQKKFKTEIRIQDLSFL.

Disordered regions lie at residues 1–21 (MDAEKKSAHFRQISSYKPQLL), 74–128 (HEKE…CNSQ), and 242–271 (LSTKNNNHNNNGNNSSMSSNTQEEETASVA). The span at 12 to 21 (QISSYKPQLL) shows a compositional bias: polar residues. A compositionally biased stretch (basic and acidic residues) spans 74–83 (HEKENTHDHP). The span at 114 to 128 (HGTPSVRSESSCNSQ) shows a compositional bias: polar residues. Low complexity predominate over residues 242–261 (LSTKNNNHNNNGNNSSMSSN).

It belongs to the PKS family.

Its function is as follows. Probably involved in the phytochrome signaling pathway. The polypeptide is Protein PHYTOCHROME KINASE SUBSTRATE 3 (PKS3) (Arabidopsis thaliana (Mouse-ear cress)).